The chain runs to 418 residues: Serine hydroxymethyltransferase (418 aa).

(6S)-5,6,7,8-tetrahydrofolate-binding positions include leucine 120 and 124–126 (GHL). N6-(pyridoxal phosphate)lysine is present on lysine 229. Residue 353-355 (SPF) participates in (6S)-5,6,7,8-tetrahydrofolate binding.

It belongs to the SHMT family. Homodimer. Pyridoxal 5'-phosphate is required as a cofactor.

It is found in the cytoplasm. The enzyme catalyses (6R)-5,10-methylene-5,6,7,8-tetrahydrofolate + glycine + H2O = (6S)-5,6,7,8-tetrahydrofolate + L-serine. It functions in the pathway one-carbon metabolism; tetrahydrofolate interconversion. Its pathway is amino-acid biosynthesis; glycine biosynthesis; glycine from L-serine: step 1/1. Functionally, catalyzes the reversible interconversion of serine and glycine with tetrahydrofolate (THF) serving as the one-carbon carrier. This reaction serves as the major source of one-carbon groups required for the biosynthesis of purines, thymidylate, methionine, and other important biomolecules. Also exhibits THF-independent aldolase activity toward beta-hydroxyamino acids, producing glycine and aldehydes, via a retro-aldol mechanism. This is Serine hydroxymethyltransferase from Psychrobacter arcticus (strain DSM 17307 / VKM B-2377 / 273-4).